A 180-amino-acid chain; its full sequence is Meiotic recombination protein rec15 (180 aa).

In terms of assembly, homomer. Interacts (via C-terminus) with hop1 (via C-terminus); the interaction is direct. Interacts (via C-terminus) with rec10; the interaction is direct. Interacts with mde2; the interaction is direct.

Its subcellular location is the nucleus. The protein resides in the chromosome. In terms of biological role, required during the early stages of meiosis for meiotic recombination. This chain is Meiotic recombination protein rec15, found in Schizosaccharomyces pombe (strain 972 / ATCC 24843) (Fission yeast).